The sequence spans 485 residues: Kynureninase 1 (485 aa).

Pyridoxal 5'-phosphate-binding positions include Leu-155, Thr-156, 183–186, Asp-267, His-270, and Tyr-292; that span reads FPSD. An N6-(pyridoxal phosphate)lysine modification is found at Lys-293. 2 residues coordinate pyridoxal 5'-phosphate: Trp-330 and Asn-358.

This sequence belongs to the kynureninase family. Homodimer. The cofactor is pyridoxal 5'-phosphate.

The protein resides in the cytoplasm. The enzyme catalyses L-kynurenine + H2O = anthranilate + L-alanine + H(+). The catalysed reaction is 3-hydroxy-L-kynurenine + H2O = 3-hydroxyanthranilate + L-alanine + H(+). Its pathway is amino-acid degradation; L-kynurenine degradation; L-alanine and anthranilate from L-kynurenine: step 1/1. It participates in cofactor biosynthesis; NAD(+) biosynthesis; quinolinate from L-kynurenine: step 2/3. In terms of biological role, catalyzes the cleavage of L-kynurenine (L-Kyn) and L-3-hydroxykynurenine (L-3OHKyn) into anthranilic acid (AA) and 3-hydroxyanthranilic acid (3-OHAA), respectively. The polypeptide is Kynureninase 1 (kyn-1) (Neurospora crassa (strain ATCC 24698 / 74-OR23-1A / CBS 708.71 / DSM 1257 / FGSC 987)).